Here is a 448-residue protein sequence, read N- to C-terminus: Phosphoglucosamine mutase (448 aa).

S100 (phosphoserine intermediate) is an active-site residue. 4 residues coordinate Mg(2+): S100, D240, D242, and D244. Residue S100 is modified to Phosphoserine.

The protein belongs to the phosphohexose mutase family. Mg(2+) is required as a cofactor. Activated by phosphorylation.

The catalysed reaction is alpha-D-glucosamine 1-phosphate = D-glucosamine 6-phosphate. Catalyzes the conversion of glucosamine-6-phosphate to glucosamine-1-phosphate. The polypeptide is Phosphoglucosamine mutase (Clostridium perfringens (strain SM101 / Type A)).